Here is a 483-residue protein sequence, read N- to C-terminus: MLTLDTLNVMLAVSEEGLIEEMIIALLASPQLAVFFEKFPRLKAAITDDVPRWREALRSRLTDARVPPELTEEVMCYQQSQLLSTPQFIVQLPQILDLLHRLNSPWAEQARQLVDANSSITSALHTLFLQRWRLSLIVQATTLNQQLLEEEREQLLSEVQERMTLSGQLEPILADNNTGAGRLWDMSAGQLKRGDYQLIVKYGEFLNEQPELKRLAEQLGRSREAKSIPRNDAQMETFRTMVREPATVPEQVDGLQQSDDILRLLPPELATLGITELEYEFYRRLVEKQLLTYRLHGESLREKVIERPVVHKDYDEQPRGPFIVCVDTSGSMGGFNEQCAKAFCLALMRIALAENRRCYIMLFSTEIVRYELSGPQGIEQAIRFLNQQFRGGTDLASCFRAIMERLQSREWFDADAVVISDFIAQRLPDDVTSKVKELQRVHQHRFHAVAMSAHGKPGIMRIFDHIWRFDTGMRSRLLRRWRR.

The protein belongs to the ViaA family. As to quaternary structure, homodimer. Interacts with RavA.

The protein localises to the cytoplasm. In terms of biological role, component of the RavA-ViaA chaperone complex, which may act on the membrane to optimize the function of some of the respiratory chains. ViaA stimulates the ATPase activity of RavA. The sequence is that of Regulatory protein ViaA from Shigella dysenteriae serotype 1 (strain Sd197).